Consider the following 496-residue polypeptide: GTPase Der (496 aa).

EngA-type G domains follow at residues 3–166 and 209–382; these read PVIA…VGKF and VKLA…TCAT. GTP is bound by residues 9–16, 56–60, 118–121, 215–222, 262–266, and 327–330; these read GRPNVGKS, DTGGI, NKTD, DTAGV, and NKWD. The KH-like domain occupies 383-467; sequence RRVGTSMLTR…PIRIQFKEGE (85 aa).

Belongs to the TRAFAC class TrmE-Era-EngA-EngB-Septin-like GTPase superfamily. EngA (Der) GTPase family. As to quaternary structure, associates with the 50S ribosomal subunit.

GTPase that plays an essential role in the late steps of ribosome biogenesis. The protein is GTPase Der of Proteus mirabilis (strain HI4320).